The chain runs to 109 residues: Small ribosomal subunit protein uS17A (109 aa).

It belongs to the universal ribosomal protein uS17 family. Part of the 30S ribosomal subunit.

One of the primary rRNA binding proteins, it binds specifically to the 5'-end of 16S ribosomal RNA. The sequence is that of Small ribosomal subunit protein uS17A from Methanosarcina acetivorans (strain ATCC 35395 / DSM 2834 / JCM 12185 / C2A).